Here is a 357-residue protein sequence, read N- to C-terminus: Serine protease 1 (357 aa).

The first 29 residues, 1 to 29, serve as a signal peptide directing secretion; it reads MRRTTRARTGLSALLLAASLGLGAAPAGA. Residues 30–170 constitute a propeptide that is removed on maturation; the sequence is DAPQRPAPTP…TRVPGVFQRE (141 aa). A disulfide bridge connects residues cysteine 184 and cysteine 204. Residues histidine 203, aspartate 232, and serine 313 each act as charge relay system in the active site. A disulfide bridge connects residues cysteine 307 and cysteine 333.

Belongs to the peptidase S1 family.

It localises to the secreted. In terms of biological role, serine protease that preferentially cleaves peptide bonds on the C-terminal side of aspartate and glutamate with a 10-fold higher reactivity for a glutamyl bond than an aspartyl bond. This chain is Serine protease 1, found in Streptomyces fradiae (Streptomyces roseoflavus).